Reading from the N-terminus, the 483-residue chain is MEFETVIGLEVHAQLLTRSKMFCGCSADYAGAPPNTHVCPVCLGLPGSLPVINRRAVEMTVMTGLALGCRIPPYSKFDRKNYMYPDLPKGYQISQYDLPLCVDGALEFLVDGQRRRVRIRRVHLEEDTARLVHRTVAGESYSLVDMNRSGVPLIEIVTEPDLHSPEEARLFLQSLRQVLRYLGVSTGNMEEGAFRCDANISQRTVDGQQQWPKAEIKNLNSFRSVERALAYEEQRQRAAIRRGERLVQETRGWLEDQGITVTQRAKEYPDDYRYFPEPDLPPIFLTEDDLARIRAAMPELPLARWERFQVEYGLGPQEAALLTEERAVADFFEACVAGDRTLAREAANWITGELFALMRERGCGISEVGVQPRQLRQLIELVQRGTISTLTAKELLGAVSETGTDPEVLVAERGLAQVSDEAQLRAIVQRVLAENPKAVADYRKGKTAAIGFLLGQVNRALAGRANPAVARRLLEEALQQPVE.

It belongs to the GatB/GatE family. GatB subfamily. As to quaternary structure, heterotrimer of A, B and C subunits.

It catalyses the reaction L-glutamyl-tRNA(Gln) + L-glutamine + ATP + H2O = L-glutaminyl-tRNA(Gln) + L-glutamate + ADP + phosphate + H(+). It carries out the reaction L-aspartyl-tRNA(Asn) + L-glutamine + ATP + H2O = L-asparaginyl-tRNA(Asn) + L-glutamate + ADP + phosphate + 2 H(+). Functionally, allows the formation of correctly charged Asn-tRNA(Asn) or Gln-tRNA(Gln) through the transamidation of misacylated Asp-tRNA(Asn) or Glu-tRNA(Gln) in organisms which lack either or both of asparaginyl-tRNA or glutaminyl-tRNA synthetases. The reaction takes place in the presence of glutamine and ATP through an activated phospho-Asp-tRNA(Asn) or phospho-Glu-tRNA(Gln). The sequence is that of Aspartyl/glutamyl-tRNA(Asn/Gln) amidotransferase subunit B from Thermomicrobium roseum (strain ATCC 27502 / DSM 5159 / P-2).